The primary structure comprises 416 residues: MADVEQVQVRFFTKQKKYEIADTPFSLSANIGHGDLNDLINGLLGAGNVGQSIQFDFLIDSQYLQDTIQKHMKAKEISAESVVEIEYLEKHPAPQPDNILVHDDWVSSVSRCKNCIITGSYDNCVQIWDDQGSCLAKVKGHTSPVKDVEWVSKDEQKGVFLSSSQDQSIRVMEWSIGSGEASCVHVCKGHTQSVDSISINPSATKFCSGSWDKTLKLWSAVVNPEGGDEGENGSLSKKQKTTGVKKKATTRTPLMTFTGHTQAVSSVVWMDRTTICSAGWDHCIRLWDAESGVNKQTLTGSKVFCEIAYSALNQCLASGSADKYIRLWDHRAEDGQVVRGILTSHQGWVSSVSWSPSNQFELASASYDTTVKIWDTRSPYTPLYTLTGHQDKVMCVRWSSSRHLMSGGTDNQLILY.

Residues 7-89 (VQVRFFTKQK…ESVVEIEYLE (83 aa)) are ubiquitin-like (UBL) domain. WD repeat units follow at residues 101-138 (VHDD…LAKV), 140-184 (GHTS…ASCV), 189-228 (GHTQ…EGGD), 259-297 (GHTQ…NKQT), 299-338 (TGSK…GQVV), 344-384 (SHQG…TPLY), and 388-416 (GHQD…LILY). A disordered region spans residues 226-245 (GGDEGENGSLSKKQKTTGVK).

The protein belongs to the WD repeat WDR12/YTM1 family.

It localises to the nucleus. The protein localises to the nucleolus. It is found in the nucleoplasm. Required for maturation of ribosomal RNAs and formation of the large ribosomal subunit. The chain is Ribosome biogenesis protein WDR12 homolog from Nematostella vectensis (Starlet sea anemone).